Consider the following 378-residue polypeptide: MKNFNLLAVSSILLVDLFPTHCGHNVDLSRAINLNGVSFNNVDASSLGAAQVRQSASRGRGLGENPKNEEGADKQKKDEKKVEPKKPRENKLKQPPPADGARAEDGARAEDGARAEDGARAEDGARAADGARAADGARAADGARAEDGARAEDGARAEDGARAADGARAADGARAADGARAADGARAADGARAADGARAADGARAEDGAPAGNREGGQAGAGGNQAGGQAGAGGNQAGGQAGAGGNQAGGQAGAGGNQAGGQAGAGGNRAGGQAGAGDAGAGQGQNNEGANMPNAKLVKEYLDKIRSTIGVEWSPCTVTCGKGVRMRRKVSAANKKPEELDVNDLETEVCTMDKCAGIFNVVSNSLGLVILLVLALFN.

The signal sequence occupies residues 1 to 22 (MKNFNLLAVSSILLVDLFPTHC). The interval 50 to 291 (AQVRQSASRG…GQGQNNEGAN (242 aa)) is disordered. Composition is skewed to basic and acidic residues over residues 66 to 92 (PKNE…ENKL) and 101 to 126 (ARAE…DGAR). A required for the binding to heparan sulfate proteoglycans (HSPGs) on the surface of host hepatocytes region spans residues 80 to 88 (KKVEPKKPR). Residues 91 to 95 (KLKQP) form a region I; contains the proteolytic cleavage site region. Repeat copies occupy residues 99–104 (DGARAE), 105–110 (DGARAE), 111–116 (DGARAE), 117–122 (DGARAE), 123–128 (DGARAA), 129–134 (DGARAA), 135–140 (DGARAA), 141–146 (DGARAE), 147–152 (DGARAE), 153–158 (DGARAE), 159–164 (DGARAA), 165–170 (DGARAA), 171–176 (DGARAA), 177–182 (DGARAA), 183–188 (DGARAA), 189–194 (DGARAA), 195–200 (DGARAA), 201–206 (DGARAE), 212–222 (GNREGGQAGAG), 223–233 (GNQAGGQAGAG), 234–244 (GNQAGGQAGAG), 245–255 (GNQAGGQAGAG), 256–266 (GNQAGGQAGAG), and 267–277 (GNRAGGQAGAG). The interval 99–206 (DGARAEDGAR…ARAADGARAE (108 aa)) is 18 X 6 AA tandem repeats of D-G-A-R-A-[EA]. Over residues 127–140 (AADGARAADGARAA) the composition is skewed to low complexity. The segment covering 141–162 (DGARAEDGARAEDGARAEDGAR) has biased composition (basic and acidic residues). The span at 163–200 (AADGARAADGARAADGARAADGARAADGARAADGARAA) shows a compositional bias: low complexity. Positions 212-277 (GNREGGQAGA…NRAGGQAGAG (66 aa)) are 6 X 11 AA tandem repeats of G-N-[QR]-[AE]-G-G-Q-A-G-A-G. Residues 214 to 283 (REGGQAGAGG…AGAGDAGAGQ (70 aa)) show a composition bias toward gly residues. One can recognise a TSP type-1 domain in the interval 304–356 (KIRSTIGVEWSPCTVTCGKGVRMRRKVSAANKKPEELDVNDLETEVCTMDKCA). 2 disulfides stabilise this stretch: C316/C350 and C320/C355. A glycan (O-linked (Fuc) threonine) is linked at T319. A lipid anchor (GPI-anchor amidated cysteine) is attached at C355. The propeptide at 356–378 (AGIFNVVSNSLGLVILLVLALFN) is removed in mature form.

Belongs to the plasmodium circumsporozoite protein family. In terms of processing, during host cell invasion, proteolytically cleaved at the cell membrane in the region I by a papain-like cysteine protease of parasite origin. Cleavage is triggered by the sporozoite contact with highly sulfated heparan sulfate proteoglycans (HSPGs) present on the host hepatocyte cell surface. Cleavage exposes the TSP type-1 (TSR) domain and is required for productive invasion of host hepatocytes but not for adhesion to the host cell membrane. Cleavage is dispensable for sporozoite development in the oocyst, motility and for traversal of host and vector cells. Post-translationally, O-glycosylated; maybe by POFUT2.

It localises to the cell membrane. The protein localises to the cytoplasm. Its function is as follows. Essential sporozoite protein. In the mosquito vector, required for sporozoite development in the oocyst, migration through the vector hemolymph and entry into the vector salivary glands. In the vertebrate host, required for sporozoite migration through the host dermis and infection of host hepatocytes. Binds to highly sulfated heparan sulfate proteoglycans (HSPGs) on the surface of host hepatocytes. In the vertebrate host, binds to highly sulfated heparan sulfate proteoglycans (HSPGs) on the surface of host hepatocytes and is required for sporozoite invasion of the host hepatocytes. The polypeptide is Circumsporozoite protein (Plasmodium cynomolgi (strain London)).